The chain runs to 308 residues: Glycine betaine uptake system ATP-binding protein YehX (308 aa).

One can recognise an ABC transporter domain in the interval 2–235 (IEFSHVSKLF…PANDFVRQFF (234 aa)). ATP is bound at residue 34-41 (GTSGSGKS).

This sequence belongs to the ABC transporter superfamily. In terms of assembly, the complex is composed of two ATP-binding proteins (YehX), two transmembrane proteins (YehW and YehY) and a solute-binding protein (YehZ).

The enzyme catalyses glycine betaine(out) + ATP + H2O = glycine betaine(in) + ADP + phosphate + H(+). In terms of biological role, part of an ABC transporter complex involved in low-affinity glycine betaine uptake. Probably responsible for energy coupling to the transport system. The protein is Glycine betaine uptake system ATP-binding protein YehX (yehX) of Escherichia coli (strain K12).